Reading from the N-terminus, the 126-residue chain is Methylglyoxal synthase (126 aa).

The MGS-like domain occupies 1-126 (MAERQKIALI…ADRLLPVITE (126 aa)). Substrate is bound by residues histidine 12, lysine 16, 38–41 (TGTT), and 59–60 (SG). The active-site Proton donor/acceptor is aspartate 65. Histidine 92 lines the substrate pocket.

This sequence belongs to the methylglyoxal synthase family.

It catalyses the reaction dihydroxyacetone phosphate = methylglyoxal + phosphate. Catalyzes the formation of methylglyoxal from dihydroxyacetone phosphate. This Allorhizobium ampelinum (strain ATCC BAA-846 / DSM 112012 / S4) (Agrobacterium vitis (strain S4)) protein is Methylglyoxal synthase.